The primary structure comprises 264 residues: MENYSSLLIGGKQFSSRLMVGTGKYKSTQDMVASLSNSETEIITVAVRRIKNDQTGENLLEKINWEKYWMLPNTAGCVNSDEAVRIAILGRELAKLSGQEENNFVKLEVIPDKKYLLPDPIETLKAAEILIKKGFAVLPYINADPILAKRLEEIGCATVMPLGSPIGSGQGLLNLSNIRIIIENSKVPVIIDAGIGVPSEASQAMEIGADGVLINSAIAQAANPPLMAQAINYSVKAGRQAFLAGRIKKQDFAVASSPEKNISI.

Residue K106 is the Schiff-base intermediate with DXP of the active site. Residues G167, 193–194, and 215–216 contribute to the 1-deoxy-D-xylulose 5-phosphate site; these read AG and NS.

It belongs to the ThiG family. Homotetramer. Forms heterodimers with either ThiH or ThiS.

The protein localises to the cytoplasm. It catalyses the reaction [ThiS sulfur-carrier protein]-C-terminal-Gly-aminoethanethioate + 2-iminoacetate + 1-deoxy-D-xylulose 5-phosphate = [ThiS sulfur-carrier protein]-C-terminal Gly-Gly + 2-[(2R,5Z)-2-carboxy-4-methylthiazol-5(2H)-ylidene]ethyl phosphate + 2 H2O + H(+). The protein operates within cofactor biosynthesis; thiamine diphosphate biosynthesis. Functionally, catalyzes the rearrangement of 1-deoxy-D-xylulose 5-phosphate (DXP) to produce the thiazole phosphate moiety of thiamine. Sulfur is provided by the thiocarboxylate moiety of the carrier protein ThiS. In vitro, sulfur can be provided by H(2)S. The chain is Thiazole synthase from Prochlorococcus marinus (strain AS9601).